A 294-amino-acid polypeptide reads, in one-letter code: Xyloglucan endotransglucosylase protein 34 (294 aa).

The N-terminal stretch at 1 to 22 (MAAAYPWTLFLGMLVMVSGTMG) is a signal peptide. Residues 23–221 (AALRKPVDVA…WSKAPFIASY (199 aa)) enclose the GH16 domain. The active-site Nucleophile is the E107. E111 functions as the Proton donor in the catalytic mechanism. E111 contacts xyloglucan. The N-linked (GlcNAc...) asparagine glycan is linked to N115. Xyloglucan contacts are provided by residues 124–126 (QTN), 134–136 (DRE), 200–201 (DW), and G205. Intrachain disulfides connect C229-C238 and C275-C288. Position 280 (R280) interacts with xyloglucan.

Belongs to the glycosyl hydrolase 16 family. XTH group 1 subfamily. Post-translationally, contains at least one intrachain disulfide bond essential for its enzymatic activity. N-glycosylated. Contains N-acetylglucosamine and mannose. Glycosylation is not essential for its catalytic activity. Expressed in mature gelatinous (G) cell wall layer of the tension wood fibers. Highly expressed in the outer zone of the G layer close to the secondary S2 layer. Not expressed in the mature walls of the ray cells or vessel elements (at protein level). Highest expression in both the phloem/cambium and differentiating xylem of the mature stem containing primarily secondary cell wall forming cells, in root tips and young roots. Expressed at low levels in apical bud.

It is found in the secreted. The protein localises to the cell wall. The protein resides in the extracellular space. It localises to the apoplast. Its subcellular location is the cytoplasm. It catalyses the reaction breaks a beta-(1-&gt;4) bond in the backbone of a xyloglucan and transfers the xyloglucanyl segment on to O-4 of the non-reducing terminal glucose residue of an acceptor, which can be a xyloglucan or an oligosaccharide of xyloglucan.. Catalyzes xyloglucan endotransglycosylation (XET). Cleaves and religates xyloglucan polymers. Does not catalyze xyloglucan endohydrolysis (XEH). Involved in early phases of secondary (S) cell wall formation in fibers of the xylem and phloem vascular tissues of wood stems. May play a role in restructuring primary cell walls, possibly creating and reinforcing the connections between the primary and S cell wall layers. Functions in the gelatinous (G) layers of the tension wood fibers that are involved in bending of the wood stems. May play a role in G fiber shrinking by repairing broken xyloglucan cross-links between G and S2 cell wall layers via its XET activity to maintain connections between the layers. The protein is Xyloglucan endotransglucosylase protein 34 of Populus tremula x Populus tremuloides (Hybrid aspen).